The sequence spans 425 residues: Dipeptidase tcpJ (425 aa).

Zn(2+) contacts are provided by histidine 46, aspartate 48, and glutamate 158. Substrate is bound by residues histidine 185, arginine 259, and aspartate 318.

The protein belongs to the metallo-dependent hydrolases superfamily. Peptidase M19 family. Zn(2+) serves as cofactor.

The enzyme catalyses an L-aminoacyl-L-amino acid + H2O = 2 an L-alpha-amino acid. Dipeptidase; part of the gene cluster that mediates the biosynthesis of an unusual class of epipolythiodioxopiperazines (ETPs) lacking the reactive thiol group important for toxicity. Firstly, L-tyrosine is prenylated by tcpD, before undergoing condensation with L-glycine in a reaction catalyzed by the NRPS tcpP leading to the diketopiperazine (DKP) backbone. Afterwards the alpha-carbon of tyrosine is oxidized by the cytochrome P450 tcpC to form a hydroxyl group. However, in contrast other ETP biosynthesis pathways studied so far, tcpC is not able to bishydroxylate the DKP at both alpha-carbon positions, but hydroxylates the alpha-carbon of the tyrosine part and the nitrogen of the glycine part. The next steps involve an alpha,beta-elimination reaction catalyzed by tcpI, a methylation by the methyltransferase tcpN the action of the four enzyme cascade tcpG/K/J/I. Due to a dysfunctional cytochrome P450 monooxygenase tcpC, the pathway leads to the biosynthesis of probable non-toxic metabolites lacking the reactive thiol group. The polypeptide is Dipeptidase tcpJ (Claviceps purpurea (strain 20.1) (Ergot fungus)).